A 232-amino-acid chain; its full sequence is Phosphatidylserine decarboxylase proenzyme (232 aa).

The Schiff-base intermediate with substrate; via pyruvic acid role is filled by Ser190. The residue at position 190 (Ser190) is a Pyruvic acid (Ser); by autocatalysis.

This sequence belongs to the phosphatidylserine decarboxylase family. PSD-A subfamily. As to quaternary structure, heterodimer of a large membrane-associated beta subunit and a small pyruvoyl-containing alpha subunit. Pyruvate serves as cofactor. Post-translationally, is synthesized initially as an inactive proenzyme. Formation of the active enzyme involves a self-maturation process in which the active site pyruvoyl group is generated from an internal serine residue via an autocatalytic post-translational modification. Two non-identical subunits are generated from the proenzyme in this reaction, and the pyruvate is formed at the N-terminus of the alpha chain, which is derived from the carboxyl end of the proenzyme. The post-translation cleavage follows an unusual pathway, termed non-hydrolytic serinolysis, in which the side chain hydroxyl group of the serine supplies its oxygen atom to form the C-terminus of the beta chain, while the remainder of the serine residue undergoes an oxidative deamination to produce ammonia and the pyruvoyl prosthetic group on the alpha chain.

Its subcellular location is the cell membrane. It catalyses the reaction a 1,2-diacyl-sn-glycero-3-phospho-L-serine + H(+) = a 1,2-diacyl-sn-glycero-3-phosphoethanolamine + CO2. It participates in phospholipid metabolism; phosphatidylethanolamine biosynthesis; phosphatidylethanolamine from CDP-diacylglycerol: step 2/2. Its function is as follows. Catalyzes the formation of phosphatidylethanolamine (PtdEtn) from phosphatidylserine (PtdSer). The protein is Phosphatidylserine decarboxylase proenzyme of Brucella abortus (strain S19).